Here is a 191-residue protein sequence, read N- to C-terminus: GDP-mannose pyrophosphatase (191 aa).

GDP-alpha-D-mannose-binding positions include Y17, 38–40 (KRE), R67, and 85–87 (AGL). Positions 43 to 180 (DRGNGATILL…EIRDGKTVLL (138 aa)) constitute a Nudix hydrolase domain. Residues A85, E100, and E104 each contribute to the Mg(2+) site. The Nudix box motif lies at 86–106 (GLLDNDEPEVCIRKEAIEETG). Residues E104, E127, 150 to 151 (DE), and K176 each bind GDP-alpha-D-mannose. E151 provides a ligand contact to Mg(2+).

This sequence belongs to the Nudix hydrolase family. NudK subfamily. Homodimer. Requires Mg(2+) as cofactor.

The catalysed reaction is GDP-alpha-D-mannose + H2O = alpha-D-mannose 1-phosphate + GMP + 2 H(+). Nucleoside diphosphate sugar hydrolase that hydrolyzes GDP-mannose as its preferred substrate, yielding GMP and mannose-1-phosphate. In Shigella boydii serotype 4 (strain Sb227), this protein is GDP-mannose pyrophosphatase (nudK).